The primary structure comprises 257 residues: E3 ubiquitin-protein ligase RNF170 (257 aa).

Residues 1–24 (MADNQEERPHFPLDEGSIIEGVSD) lie on the Lumenal side of the membrane. A helical membrane pass occupies residues 25–45 (QVIVVVLLSFVAVGSLIYLLL). The Cytoplasmic segment spans residues 46-200 (RNDEQNIHPE…GGLFWMFRIR (155 aa)). The RING-type zinc finger occupies 87–130 (CPVCLQQATFPVETNCGHLFCGSCIIAYWRYGTWLGAINCPICR). Residues 201-221 (IVLCLLGALLYLVSPLDIIPE) form a helical membrane-spanning segment. Position 222 (Ala222) is a topological domain, lumenal. A helical membrane pass occupies residues 223–243 (LFGILGFLDDLFVLFLLLIYI). Topologically, residues 244–257 (SIMYREVVTQRLYR) are cytoplasmic.

The protein localises to the endoplasmic reticulum membrane. It catalyses the reaction S-ubiquitinyl-[E2 ubiquitin-conjugating enzyme]-L-cysteine + [acceptor protein]-L-lysine = [E2 ubiquitin-conjugating enzyme]-L-cysteine + N(6)-ubiquitinyl-[acceptor protein]-L-lysine.. It functions in the pathway protein modification; protein ubiquitination. Its function is as follows. E3 ubiquitin-protein ligase that plays an essential role in stimulus-induced inositol 1,4,5-trisphosphate receptor (ITPR) ubiquitination and degradation via the endoplasmic reticulum-associated degradation (ERAD) pathway. Also involved in ITPR turnover in resting cells. The protein is E3 ubiquitin-protein ligase RNF170 (rnf170) of Xenopus laevis (African clawed frog).